Here is a 300-residue protein sequence, read N- to C-terminus: Probable alpha-L-glutamate ligase (300 aa).

Positions 104–287 (LQLLARQGID…IAGKMISWIE (184 aa)) constitute an ATP-grasp domain. Residues Lys141, 178–179 (EY), Asp187, and 211–213 (RSN) each bind ATP. Asp248, Glu260, and Asn262 together coordinate Mg(2+). 3 residues coordinate Mn(2+): Asp248, Glu260, and Asn262.

This sequence belongs to the RimK family. It depends on Mg(2+) as a cofactor. Mn(2+) serves as cofactor.

In Enterobacter sp. (strain 638), this protein is Probable alpha-L-glutamate ligase.